Here is a 266-residue protein sequence, read N- to C-terminus: UPF0246 protein Pcryo_0542 (266 aa).

The protein belongs to the UPF0246 family.

The chain is UPF0246 protein Pcryo_0542 from Psychrobacter cryohalolentis (strain ATCC BAA-1226 / DSM 17306 / VKM B-2378 / K5).